The following is a 494-amino-acid chain: Glucose-6-phosphate exchanger SLC37A2 (494 aa).

Residues 20–37 (YRFSILFLTFVFYTSYHL) traverse the membrane as a helical segment. N-linked (GlcNAc...) asparagine glycans are attached at residues Asn52, Asn63, and Asn67. A run of 11 helical transmembrane segments spans residues 85–105 (FGVL…FSGI), 116–136 (LSTG…GFYW), 146–166 (LVQA…VACV), 187–207 (SVGN…AWGL), 208–228 (SFIV…LFLV), 295–315 (LCLL…PLYI), 327–347 (GDLS…AGLV), 355–375 (ASTC…YNKI), 384–404 (VGML…ITTA), 427–447 (AIID…AGLI), and 455–475 (VFYM…RLVY).

The protein belongs to the major facilitator superfamily. Organophosphate:Pi antiporter (OPA) (TC 2.A.1.4) family.

The protein resides in the endoplasmic reticulum membrane. It carries out the reaction D-glucose 6-phosphate(in) + phosphate(out) = D-glucose 6-phosphate(out) + phosphate(in). Functionally, inorganic phosphate and glucose-6-phosphate antiporter. May transport cytoplasmic glucose-6-phosphate into the lumen of the endoplasmic reticulum and translocate inorganic phosphate into the opposite direction. The chain is Glucose-6-phosphate exchanger SLC37A2 from Danio rerio (Zebrafish).